A 133-amino-acid polypeptide reads, in one-letter code: Ribosome-binding factor A (133 aa).

This sequence belongs to the RbfA family. Monomer. Binds 30S ribosomal subunits, but not 50S ribosomal subunits or 70S ribosomes.

Its subcellular location is the cytoplasm. One of several proteins that assist in the late maturation steps of the functional core of the 30S ribosomal subunit. Associates with free 30S ribosomal subunits (but not with 30S subunits that are part of 70S ribosomes or polysomes). Required for efficient processing of 16S rRNA. May interact with the 5'-terminal helix region of 16S rRNA. The protein is Ribosome-binding factor A of Klebsiella pneumoniae (strain 342).